Here is a 513-residue protein sequence, read N- to C-terminus: Probable hydrolase YhcX (513 aa).

Positions 14–212 (MVIRNIEEKD…YATLMEWNNV (199 aa)) constitute an N-acetyltransferase domain. The CN hydrolase domain maps to 229 to 484 (VRICVIQYEM…EMVVIGDVDL (256 aa)). Glu-270 (proton acceptor) is an active-site residue. Lys-345 (proton donor) is an active-site residue. The active-site Nucleophile is the Cys-379.

The protein belongs to the carbon-nitrogen hydrolase superfamily. NIT1/NIT2 family.

The sequence is that of Probable hydrolase YhcX (yhcX) from Bacillus subtilis (strain 168).